The primary structure comprises 1060 residues: Protein FAM184B (1060 aa).

A compositionally biased stretch (polar residues) spans 1-17 (MASALNSKINPPGTCQG). Residues 1-24 (MASALNSKINPPGTCQGSKADGGA) form a disordered region. Positions 51-159 (ALNTRQDEAE…EMLELKADYE (109 aa)) form a coiled coil. The segment at 165–191 (LTSHEATPQGRLPQESPETKSEPGQGP) is disordered. 2 coiled-coil regions span residues 192 to 333 (EMQE…DRMM) and 402 to 502 (MKQQ…RLEE). Disordered regions lie at residues 532-566 (QDPCLKLDETSPRGEEYQDKLAAEEGTSSDEEERT), 681-700 (TEERLKKESSHSLQIQHQTH), and 762-803 (GRQQ…GSGE). 3 stretches are compositionally biased toward basic and acidic residues: residues 536 to 554 (LKLDETSPRGEEYQDKLAA), 681 to 690 (TEERLKKESS), and 773 to 785 (DSKDHIIATEERG). A coiled-coil region spans residues 584–769 (LKEKTSKIQR…ALGRQQASSQ (186 aa)). Residues 806–934 (GLWEENAQLQ…KQLTEERRFH (129 aa)) are a coiled coil. Composition is skewed to polar residues over residues 994–1009 (SRINAPPITTSPSLDP) and 1018–1030 (KPNQSTDAKTATR). Positions 994-1050 (SRINAPPITTSPSLDPSPSCGRTYKPNQSTDAKTATRTPDGETAQAKEVQQKQGSPH) are disordered.

This sequence belongs to the FAM184 family.

In Homo sapiens (Human), this protein is Protein FAM184B (FAM184B).